We begin with the raw amino-acid sequence, 224 residues long: Uracil-DNA glycosylase (224 aa).

D61 functions as the Proton acceptor in the catalytic mechanism.

The protein belongs to the uracil-DNA glycosylase (UDG) superfamily. UNG family.

Its subcellular location is the cytoplasm. It catalyses the reaction Hydrolyzes single-stranded DNA or mismatched double-stranded DNA and polynucleotides, releasing free uracil.. Its function is as follows. Excises uracil residues from the DNA which can arise as a result of misincorporation of dUMP residues by DNA polymerase or due to deamination of cytosine. The sequence is that of Uracil-DNA glycosylase from Mannheimia succiniciproducens (strain KCTC 0769BP / MBEL55E).